The chain runs to 675 residues: DNA gyrase subunit B (675 aa).

Residues Ser-453–Pro-567 form the Toprim domain. The Mg(2+) site is built by Glu-459, Asp-532, and Asp-534.

The protein belongs to the type II topoisomerase GyrB family. In terms of assembly, heterotetramer, composed of two GyrA and two GyrB chains. In the heterotetramer, GyrA contains the active site tyrosine that forms a transient covalent intermediate with DNA, while GyrB binds cofactors and catalyzes ATP hydrolysis. Mg(2+) is required as a cofactor. It depends on Mn(2+) as a cofactor. The cofactor is Ca(2+).

It localises to the cytoplasm. The catalysed reaction is ATP-dependent breakage, passage and rejoining of double-stranded DNA.. Inhibited by 4-quinoline drugs (nalidixic acid, ciprofloxacin, ofloxacin), although it is much less sensitive than the corresponding enzyme from E.coli. GyrB intrinsic ATPase activity inhibited by aminopyrazinamide and pyrrolamide derivatives. In terms of biological role, a type II topoisomerase that negatively supercoils closed circular double-stranded (ds) DNA in an ATP-dependent manner to modulate DNA topology and maintain chromosomes in an underwound state. Negative supercoiling favors strand separation, and DNA replication, transcription, recombination and repair, all of which involve strand separation. Also able to catalyze the interconversion of other topological isomers of dsDNA rings, including catenanes and knotted rings. Type II topoisomerases break and join 2 DNA strands simultaneously in an ATP-dependent manner. The protein is DNA gyrase subunit B of Mycolicibacterium smegmatis (strain ATCC 700084 / mc(2)155) (Mycobacterium smegmatis).